The primary structure comprises 154 residues: Large ribosomal subunit protein uL13 (154 aa).

It belongs to the universal ribosomal protein uL13 family. Part of the 50S ribosomal subunit.

In terms of biological role, this protein is one of the early assembly proteins of the 50S ribosomal subunit, although it is not seen to bind rRNA by itself. It is important during the early stages of 50S assembly. The polypeptide is Large ribosomal subunit protein uL13 (Bartonella henselae (strain ATCC 49882 / DSM 28221 / CCUG 30454 / Houston 1) (Rochalimaea henselae)).